Reading from the N-terminus, the 362-residue chain is Probable dual-specificity RNA methyltransferase RlmN (362 aa).

Residue Glu-91 is the Proton acceptor of the active site. A Radical SAM core domain is found at Gln-97–Arg-329. Cys-104 and Cys-340 form a disulfide bridge. [4Fe-4S] cluster-binding residues include Cys-111, Cys-115, and Cys-118. S-adenosyl-L-methionine-binding positions include Gly-163–Glu-164, Ser-195, Ser-218–His-220, and Asn-296. Residue Cys-340 is the S-methylcysteine intermediate of the active site.

It belongs to the radical SAM superfamily. RlmN family. Requires [4Fe-4S] cluster as cofactor.

It is found in the cytoplasm. The catalysed reaction is adenosine(2503) in 23S rRNA + 2 reduced [2Fe-2S]-[ferredoxin] + 2 S-adenosyl-L-methionine = 2-methyladenosine(2503) in 23S rRNA + 5'-deoxyadenosine + L-methionine + 2 oxidized [2Fe-2S]-[ferredoxin] + S-adenosyl-L-homocysteine. It catalyses the reaction adenosine(37) in tRNA + 2 reduced [2Fe-2S]-[ferredoxin] + 2 S-adenosyl-L-methionine = 2-methyladenosine(37) in tRNA + 5'-deoxyadenosine + L-methionine + 2 oxidized [2Fe-2S]-[ferredoxin] + S-adenosyl-L-homocysteine. In terms of biological role, specifically methylates position 2 of adenine 2503 in 23S rRNA and position 2 of adenine 37 in tRNAs. The polypeptide is Probable dual-specificity RNA methyltransferase RlmN (Streptococcus sanguinis (strain SK36)).